Reading from the N-terminus, the 172-residue chain is Myosin regulatory light polypeptide 9 (172 aa).

A compositionally biased stretch (basic residues) spans 1–16 (MSSKRAKTKTTKKRPQ). A disordered region spans residues 1–20 (MSSKRAKTKTTKKRPQRATS). At serine 2 the chain carries N-acetylserine. Threonine 19 carries the post-translational modification Phosphothreonine; by MLCK, CIT and ROCK2. Position 20 is a phosphoserine; by CDC42BP, CIT, MLCK, PAK1, ROCK1, ROCK2, DAPK1, DAPK2 and ZIPK/DAPK3 (serine 20). 3 consecutive EF-hand domains span residues 29–64 (SQIQ…LGKN), 98–133 (DPED…MGDR), and 134–169 (FTDE…GAKD). Ca(2+)-binding residues include aspartate 42, asparagine 44, aspartate 46, and aspartate 53.

Myosin is a hexamer of 2 heavy chains and 4 light chains: interacts with myosin heavy chain MYO19. Interacts with LUZP1; the interaction results in inhibition of phosphorylation of MYL9 by DAPK3. Phosphorylation increases the actin-activated myosin ATPase activity and thereby regulates the contractile activity. It is required to generate the driving force in the migration of the cells but not necessary for localization of myosin-2 at the leading edge. Phosphorylation is required for myotube formation. Phosphorylated by DAPK3; DAPK3-mediated phosphorylation is inhibited by LUZP1.

It localises to the cytoplasm. It is found in the cytoskeleton. The protein localises to the cell cortex. Its function is as follows. Myosin regulatory subunit that plays an important role in regulation of both smooth muscle and nonmuscle cell contractile activity via its phosphorylation. Implicated in cytokinesis, receptor capping, and cell locomotion. In myoblasts, may regulate PIEZO1-dependent cortical actomyosin assembly involved in myotube formation. This is Myosin regulatory light polypeptide 9 (MYL9) from Bos taurus (Bovine).